Consider the following 1837-residue polypeptide: Nucleoporin nup211 (1837 aa).

Coiled-coil stretches lie at residues 59–378 (EVNY…YDEI), 415–519 (YKQK…ELDL), and 559–625 (VFRN…QLRY). Thr650 bears the Phosphothreonine mark. 3 coiled-coil regions span residues 661–1163 (EQTS…NKLL), 1222–1637 (LDNR…ENTH), and 1675–1712 (KAKI…PEKT). Residues 1464–1521 (KDSNHQLQESASSDAEQITKEQFEQLKSEKERTEKELADSKNELEHLQSEAVDADGKT) form a disordered region. Residues 1468-1479 (HQLQESASSDAE) show a composition bias toward polar residues. The segment covering 1480 to 1521 (QITKEQFEQLKSEKERTEKELADSKNELEHLQSEAVDADGKT) has biased composition (basic and acidic residues). Ser1558 carries the post-translational modification Phosphoserine. A Phosphothreonine modification is found at Thr1560. At Ser1563 the chain carries Phosphoserine. Disordered regions lie at residues 1602 to 1642 (EKEK…NIDD) and 1700 to 1837 (ENLN…KKAK). A compositionally biased stretch (basic and acidic residues) spans 1617-1628 (KSQRIKELEEQA). Polar residues-rich tracts occupy residues 1700–1730 (ENLN…SKPT), 1753–1763 (KSLSARLQGTG), 1795–1814 (IATS…TAKS), and 1827–1837 (GGSSSNQKKAK).

The protein localises to the cytoplasm. Its subcellular location is the nucleus. Functions as a component of the nuclear pore complex (NPC). NPC components, collectively referred to as nucleoporins (NUPs), can play the role of both NPC structural components and of docking or interaction partners for transiently associated nuclear transport factors. Active directional transport is assured by both, a Phe-Gly (FG) repeat affinity gradient for these transport factors across the NPC and a transport cofactor concentration gradient across the nuclear envelope. The chain is Nucleoporin nup211 (nup211) from Schizosaccharomyces pombe (strain 972 / ATCC 24843) (Fission yeast).